Consider the following 498-residue polypeptide: COP9 signalosome complex subunit 1 (498 aa).

Residues 249–430 (SYLEAANSFI…HVLVSTQGDK (182 aa)) enclose the PCI domain.

This sequence belongs to the CSN1 family. As to quaternary structure, component of the COP9 signalosome (CSN) complex.

The protein localises to the cytoplasm. The protein resides in the nucleus. In terms of biological role, component of the COP9 signalosome (CSN) complex that acts as an regulator of the ubiquitin (Ubl) conjugation pathway by mediating the deneddylation of the cullin subunit of SCF-type E3 ubiquitin-protein ligase complexes. The CSN complex seems to link protein degradation to sexual development. Required for fruit body formation. The chain is COP9 signalosome complex subunit 1 (csnA) from Emericella nidulans (strain FGSC A4 / ATCC 38163 / CBS 112.46 / NRRL 194 / M139) (Aspergillus nidulans).